Reading from the N-terminus, the 409-residue chain is Argininosuccinate synthase (409 aa).

Residues Ala10–Ser18 and Ala37 contribute to the ATP site. L-citrulline is bound by residues Tyr90 and Ser95. Gly120 lines the ATP pocket. L-aspartate contacts are provided by Thr122, Asn126, and Asp127. Asn126 contacts L-citrulline. 5 residues coordinate L-citrulline: Arg130, Ser182, Ser191, Glu267, and Tyr279.

It belongs to the argininosuccinate synthase family. Type 1 subfamily. Homotetramer.

The protein resides in the cytoplasm. It catalyses the reaction L-citrulline + L-aspartate + ATP = 2-(N(omega)-L-arginino)succinate + AMP + diphosphate + H(+). It participates in amino-acid biosynthesis; L-arginine biosynthesis; L-arginine from L-ornithine and carbamoyl phosphate: step 2/3. The chain is Argininosuccinate synthase from Aromatoleum aromaticum (strain DSM 19018 / LMG 30748 / EbN1) (Azoarcus sp. (strain EbN1)).